The primary structure comprises 59 residues: Large ribosomal subunit protein bL32 (59 aa).

A disordered region spans residues 1–20 (MAVPRNRHSNARKNIRRSHH).

It belongs to the bacterial ribosomal protein bL32 family.

This is Large ribosomal subunit protein bL32 from Chlamydia trachomatis serovar A (strain ATCC VR-571B / DSM 19440 / HAR-13).